The chain runs to 317 residues: MAVQGSQRRLLGSLNSTPTAIPQLGLAANQTGARCLEVSISDGLFLSLGLVSLVENALVVATIAKNRNLHSPMYCFICCLALSDLLVSGSNVLETAVILLLEAGALVARAAVLQQLDNVIDVITCSSMLSSLCFLGAIAVDRYISIFYALRYHSIVTLPRARRAVAAIWVASVVFSTLFIAYYDHVAVLLCLVVFFLAMLVLMAVLYVHMLARACQHAQGIARLHKRQRPVHQGFGLKGAVTLTILLGIFFLCWGPFFLHLTLIVLCPEHPTCGCIFKNFNLFLALIICNAIIDPLIYAFHSQELRRTLKEVLTCSW.

Over methionine 1–glutamate 37 the chain is Extracellular. N-linked (GlcNAc...) asparagine glycosylation occurs at asparagine 29. A helical membrane pass occupies residues valine 38–isoleucine 63. The Cytoplasmic portion of the chain corresponds to alanine 64–proline 72. The helical transmembrane segment at methionine 73 to leucine 93 threads the bilayer. The Extracellular portion of the chain corresponds to glutamate 94–asparagine 118. The helical transmembrane segment at valine 119–valine 140 threads the bilayer. The Cytoplasmic portion of the chain corresponds to aspartate 141–arginine 163. A helical membrane pass occupies residues alanine 164–tyrosine 183. Over aspartate 184–cysteine 191 the chain is Extracellular. The helical transmembrane segment at leucine 192–leucine 211 threads the bilayer. Over alanine 212–alanine 240 the chain is Cytoplasmic. Residues valine 241–leucine 266 form a helical membrane-spanning segment. At cysteine 267–asparagine 279 the chain is on the extracellular side. The helical transmembrane segment at phenylalanine 280–phenylalanine 300 threads the bilayer. Topologically, residues histidine 301–tryptophan 317 are cytoplasmic. Cysteine 315 carries the S-palmitoyl cysteine lipid modification.

It belongs to the G-protein coupled receptor 1 family. Interacts with MGRN1, but does not undergo MGRN1-mediated ubiquitination; this interaction competes with GNAS-binding and thus inhibits agonist-induced cAMP production. Interacts with OPN3; the interaction results in a decrease in MC1R-mediated cAMP signaling and ultimately a decrease in melanin production in melanocytes. In terms of tissue distribution, expressed in melanocytes. Expressed in corticoadrenal tissue.

The protein localises to the cell membrane. Receptor for MSH (alpha, beta and gamma) and ACTH. The activity of this receptor is mediated by G proteins which activate adenylate cyclase. Mediates melanogenesis, the production of eumelanin (black/brown) and phaeomelanin (red/yellow), via regulation of cAMP signaling in melanocytes. The sequence is that of Melanocyte-stimulating hormone receptor (MC1R) from Homo sapiens (Human).